The primary structure comprises 198 residues: Translation machinery-associated protein 22 (198 aa).

Residues 100-171 enclose the SUI1 domain; the sequence is IIIKRSERTK…EIVEMIRQQV (72 aa).

Belongs to the DENR family. As to quaternary structure, interacts with the 40S ribosomal subunit.

Its subcellular location is the cytoplasm. The polypeptide is Translation machinery-associated protein 22 (TMA22) (Cryptococcus neoformans var. neoformans serotype D (strain B-3501A) (Filobasidiella neoformans)).